The chain runs to 155 residues: MNPELSLSVQYGVAEPRLPRWRLRRWAQRALDGAARDGLAECARAELSLRLVGQAEGRRLNHAYRERDYATNVLTFEYGTDPLGTARGDIVICVPVLAREAREQGKTLLDHAAHLTVHGVLHALGYDHIKARDARRMEALETAILTGMRIADPYA.

Zn(2+) is bound by residues H118, H122, and H128.

It belongs to the endoribonuclease YbeY family. It depends on Zn(2+) as a cofactor.

It is found in the cytoplasm. Single strand-specific metallo-endoribonuclease involved in late-stage 70S ribosome quality control and in maturation of the 3' terminus of the 16S rRNA. This is Endoribonuclease YbeY from Bordetella petrii (strain ATCC BAA-461 / DSM 12804 / CCUG 43448).